A 245-amino-acid chain; its full sequence is Uridylate kinase (245 aa).

12 to 15 (KISG) serves as a coordination point for ATP. Gly-55 lines the UMP pocket. ATP contacts are provided by Gly-56 and Arg-60. UMP contacts are provided by residues Asp-76 and 137-144 (AGAPYLTT). The ATP site is built by Thr-164, Tyr-171, and Asp-174.

The protein belongs to the UMP kinase family. Homohexamer.

The protein localises to the cytoplasm. It catalyses the reaction UMP + ATP = UDP + ADP. It participates in pyrimidine metabolism; CTP biosynthesis via de novo pathway; UDP from UMP (UMPK route): step 1/1. With respect to regulation, inhibited by UTP. Catalyzes the reversible phosphorylation of UMP to UDP. The protein is Uridylate kinase of Chlamydia trachomatis serovar A (strain ATCC VR-571B / DSM 19440 / HAR-13).